The following is a 204-amino-acid chain: Large ribosomal subunit protein eL15 (204 aa).

The disordered stretch occupies residues methionine 161–phenylalanine 180. The segment covering lysine 169–phenylalanine 180 has biased composition (basic residues).

This sequence belongs to the eukaryotic ribosomal protein eL15 family. Component of the large ribosomal subunit.

The protein resides in the cytoplasm. In terms of biological role, component of the large ribosomal subunit. The ribosome is a large ribonucleoprotein complex responsible for the synthesis of proteins in the cell. This is Large ribosomal subunit protein eL15 (rpl15) from Ictalurus punctatus (Channel catfish).